The sequence spans 92 residues: FMRFamide-like neuropeptides 16 (92 aa).

The N-terminal stretch at 1-24 (MNFSGFEFSSIVAFFLLILQLSTA) is a signal peptide. A propeptide spanning residues 25–55 (AVLPADYAYGVADEMSALPDSGSLFAEQRPS) is cleaved from the precursor. Phe64, Phe74, and Phe84 each carry phenylalanine amide. A propeptide spanning residues 87–92 (SAPFEQ) is cleaved from the precursor.

The protein belongs to the FARP (FMRFamide related peptide) family. As to expression, each flp gene is expressed in a distinct set of neurons.

Its subcellular location is the secreted. FMRFamides and FMRFamide-like peptides are neuropeptides. AQTFVRF-amide inhibits the activity of dissected pharyngeal myogenic muscle system. The polypeptide is FMRFamide-like neuropeptides 16 (Caenorhabditis elegans).